Here is a 401-residue protein sequence, read N- to C-terminus: Imidazolonepropionase (401 aa).

Fe(3+) contacts are provided by His66 and His68. 2 residues coordinate Zn(2+): His66 and His68. 3 residues coordinate 4-imidazolone-5-propanoate: Arg75, Tyr138, and His171. Tyr138 lines the N-formimidoyl-L-glutamate pocket. His236 serves as a coordination point for Fe(3+). His236 lines the Zn(2+) pocket. Gln239 contributes to the 4-imidazolone-5-propanoate binding site. Residue Asp311 participates in Fe(3+) binding. Asp311 provides a ligand contact to Zn(2+). N-formimidoyl-L-glutamate contacts are provided by Asn313 and Gly315. Thr316 lines the 4-imidazolone-5-propanoate pocket.

It belongs to the metallo-dependent hydrolases superfamily. HutI family. Zn(2+) is required as a cofactor. The cofactor is Fe(3+).

Its subcellular location is the cytoplasm. The catalysed reaction is 4-imidazolone-5-propanoate + H2O = N-formimidoyl-L-glutamate. The protein operates within amino-acid degradation; L-histidine degradation into L-glutamate; N-formimidoyl-L-glutamate from L-histidine: step 3/3. Catalyzes the hydrolytic cleavage of the carbon-nitrogen bond in imidazolone-5-propanoate to yield N-formimidoyl-L-glutamate. It is the third step in the universal histidine degradation pathway. This chain is Imidazolonepropionase, found in Pseudomonas putida (strain ATCC 47054 / DSM 6125 / CFBP 8728 / NCIMB 11950 / KT2440).